The chain runs to 134 residues: Ribosome-binding factor A (134 aa).

This sequence belongs to the RbfA family. As to quaternary structure, monomer. Binds 30S ribosomal subunits, but not 50S ribosomal subunits or 70S ribosomes.

The protein localises to the cytoplasm. Functionally, one of several proteins that assist in the late maturation steps of the functional core of the 30S ribosomal subunit. Associates with free 30S ribosomal subunits (but not with 30S subunits that are part of 70S ribosomes or polysomes). Required for efficient processing of 16S rRNA. May interact with the 5'-terminal helix region of 16S rRNA. The chain is Ribosome-binding factor A from Rhizobium johnstonii (strain DSM 114642 / LMG 32736 / 3841) (Rhizobium leguminosarum bv. viciae).